The primary structure comprises 386 residues: S-adenosylmethionine:tRNA ribosyltransferase-isomerase (386 aa).

The protein belongs to the QueA family. In terms of assembly, monomer.

The protein localises to the cytoplasm. It carries out the reaction 7-aminomethyl-7-carbaguanosine(34) in tRNA + S-adenosyl-L-methionine = epoxyqueuosine(34) in tRNA + adenine + L-methionine + 2 H(+). The protein operates within tRNA modification; tRNA-queuosine biosynthesis. Functionally, transfers and isomerizes the ribose moiety from AdoMet to the 7-aminomethyl group of 7-deazaguanine (preQ1-tRNA) to give epoxyqueuosine (oQ-tRNA). This is S-adenosylmethionine:tRNA ribosyltransferase-isomerase from Rickettsia canadensis (strain McKiel).